The following is a 64-amino-acid chain: Protein DsrB (64 aa).

Belongs to the DsrB family.

The chain is Protein DsrB from Salmonella arizonae (strain ATCC BAA-731 / CDC346-86 / RSK2980).